Reading from the N-terminus, the 197-residue chain is Recombination protein RecR (197 aa).

A C4-type zinc finger spans residues 56–71; it reads CQQCRTLTEQALCNIC. The 96-residue stretch at 79-174 folds into the Toprim domain; sequence KELCIVETPA…KVSRIAHGIP (96 aa).

This sequence belongs to the RecR family.

Functionally, may play a role in DNA repair. It seems to be involved in an RecBC-independent recombinational process of DNA repair. It may act with RecF and RecO. The sequence is that of Recombination protein RecR from Saccharophagus degradans (strain 2-40 / ATCC 43961 / DSM 17024).